We begin with the raw amino-acid sequence, 480 residues long: Immune evasion protein OPG047 (480 aa).

One can recognise a BTB domain in the interval 10–90 (CKNILALSMT…SYTGKVYIDS (81 aa)). Residues 125–223 (CVECYMMGIE…NYLSPRGINN (99 aa)) enclose the BACK domain. Kelch repeat units follow at residues 273–319 (VVYL…PANN), 320–363 (KLYV…SINN), 365–408 (IYVM…VFGR), 410–447 (LFLV…IVDN), and 448–480 (KLLL…WDGK).

The protein belongs to the orthopoxvirus OPG047 family.

Might have a role in the suppression of host immune response. This is Immune evasion protein OPG047 (OPG047) from Vaccinia virus (strain Western Reserve) (VACV).